Reading from the N-terminus, the 261-residue chain is MDPIPHSITRTLSRFRTELTSESGSLAIHELEVAEYKASASLRYLACLVGLPWVIPISLRKGLEPWVTNWWNTGKSHQIFDYLQEENALGRFEKIEELFLLERMVEDSSGTHSQDLRIEIHKETIQLVEMYNEDCIQIISHLLTNLIGFAFISAYLILGKNQLAIINSWIQEFFYSLSDTMKAFLILLATDLCIGFHSPHGWELMIDSISENYGFAHNERIISGLVSTFPVILDTILKYWIFRRFNRISPSLVVIYHSMNE.

The next 3 membrane-spanning stretches (helical) occupy residues 138–158 (IISH…YLIL), 184–204 (FLIL…GWEL), and 221–241 (IISG…KYWI).

This sequence belongs to the CemA family.

Its subcellular location is the plastid. It localises to the chloroplast inner membrane. The enzyme catalyses K(+)(in) + H(+)(out) = K(+)(out) + H(+)(in). Its function is as follows. Contributes to K(+)/H(+) antiport activity by supporting proton efflux to control proton extrusion and homeostasis in chloroplasts in a light-dependent manner to modulate photosynthesis. Prevents excessive induction of non-photochemical quenching (NPQ) under continuous-light conditions. Indirectly promotes efficient inorganic carbon uptake into chloroplasts. The polypeptide is Potassium/proton antiporter CemA (Pinus koraiensis (Korean pine)).